The primary structure comprises 145 residues: Immunity protein CdiI (145 aa).

Interacts with cognate toxin fragment CdiA-CT.

Its function is as follows. Immunity protein component of a toxin-immunity protein module, which functions as a cellular contact-dependent growth inhibition (CDI) system. CDI modules allow bacteria to communicate with and inhibit the growth of closely related neighboring bacteria in a contact-dependent fashion. Protects cells against the 16S rRNase activity of CdiA-CT, its cognate toxin protein, but not against the toxic effects of a similar rRNase, non-cognate CdiA-CT from E.chrysanthemi strain EC16. The sequence is that of Immunity protein CdiI from Enterobacter cloacae subsp. cloacae (strain ATCC 13047 / DSM 30054 / NBRC 13535 / NCTC 10005 / WDCM 00083 / NCDC 279-56).